The chain runs to 146 residues: Putative pre-16S rRNA nuclease (146 aa).

Belongs to the YqgF nuclease family.

The protein resides in the cytoplasm. Could be a nuclease involved in processing of the 5'-end of pre-16S rRNA. The chain is Putative pre-16S rRNA nuclease from Pseudomonas syringae pv. syringae (strain B728a).